The chain runs to 432 residues: Transcriptional adapter 3 (432 aa).

A coiled-coil region spans residues 40–69 (IEELDTLQLELETLLSSASRRLRVLEAETQ). 2 disordered regions span residues 88-127 (KEHE…RNMQ) and 275-313 (SPVE…HTKS). A compositionally biased stretch (polar residues) spans 293-305 (DGASTSPRSQNKP). The stretch at 367–407 (LLRLAKEEMNRQELRQRVRMADNEVMDAFRKIMAARQKKRT) forms a coiled coil.

The protein belongs to the NGG1 family.

The protein localises to the nucleus. In terms of biological role, functions as a component of the PCAF complex. The PCAF complex is capable of efficiently acetylating histones in a nucleosomal context. This chain is Transcriptional adapter 3 (tada3), found in Xenopus tropicalis (Western clawed frog).